A 143-amino-acid chain; its full sequence is Fido domain-containing protein DDB_G0283145 (143 aa).

The region spanning 1–128 (MKGIIVSDGV…TSHLALIILN (128 aa)) is the Fido domain. The chain crosses the membrane as a helical span at residues 49–69 (SSPYAVAAWLLHAFVSIHPFI).

It localises to the membrane. The sequence is that of Fido domain-containing protein DDB_G0283145 from Dictyostelium discoideum (Social amoeba).